A 459-amino-acid chain; its full sequence is ATP synthase subunit beta (459 aa).

148-155 (GGAGVGKT) is an ATP binding site.

The protein belongs to the ATPase alpha/beta chains family. F-type ATPases have 2 components, CF(1) - the catalytic core - and CF(0) - the membrane proton channel. CF(1) has five subunits: alpha(3), beta(3), gamma(1), delta(1), epsilon(1). CF(0) has three main subunits: a(1), b(2) and c(9-12). The alpha and beta chains form an alternating ring which encloses part of the gamma chain. CF(1) is attached to CF(0) by a central stalk formed by the gamma and epsilon chains, while a peripheral stalk is formed by the delta and b chains.

It is found in the cell inner membrane. It carries out the reaction ATP + H2O + 4 H(+)(in) = ADP + phosphate + 5 H(+)(out). In terms of biological role, produces ATP from ADP in the presence of a proton gradient across the membrane. The catalytic sites are hosted primarily by the beta subunits. The protein is ATP synthase subunit beta of Thioalkalivibrio sulfidiphilus (strain HL-EbGR7).